Here is a 303-residue protein sequence, read N- to C-terminus: Coenzyme PQQ synthesis protein B (303 aa).

This sequence belongs to the PqqB family.

Its pathway is cofactor biosynthesis; pyrroloquinoline quinone biosynthesis. Functionally, may be involved in the transport of PQQ or its precursor to the periplasm. This Pseudomonas fluorescens (strain SBW25) protein is Coenzyme PQQ synthesis protein B.